The chain runs to 478 residues: Cytochrome c-552 (478 aa).

An N-terminal signal peptide occupies residues 1-26 (MTRIKINARRIFSLLIPFFFFTSVHA). Position 94 (H94) interacts with heme c. The heme site is built by C122, C125, and K126. Residues C160, C163, H164, C209, C212, and H213 each contribute to the heme c site. The Ca(2+) site is built by E215, Y216, K261, and Q263. Y216 is a binding site for substrate. H264 provides a ligand contact to substrate. Heme c-binding residues include H275, C282, C285, H286, H301, C314, C317, H318, and H393.

This sequence belongs to the cytochrome c-552 family. The cofactor is Ca(2+). Requires heme c as cofactor.

It localises to the periplasm. The catalysed reaction is 6 Fe(III)-[cytochrome c] + NH4(+) + 2 H2O = 6 Fe(II)-[cytochrome c] + nitrite + 8 H(+). Its pathway is nitrogen metabolism; nitrate reduction (assimilation). Catalyzes the reduction of nitrite to ammonia, consuming six electrons in the process. In Escherichia coli (strain ATCC 8739 / DSM 1576 / NBRC 3972 / NCIMB 8545 / WDCM 00012 / Crooks), this protein is Cytochrome c-552.